A 1825-amino-acid polypeptide reads, in one-letter code: Serine protease/ABC transporter B family protein tagD (1825 aa).

A signal peptide spans methionine 1–phenylalanine 26. The region spanning proline 307–alanine 727 is the Peptidase S8 domain. Active-site charge relay system residues include aspartate 338 and histidine 384. Asparagine 629 is a glycosylation site (N-linked (GlcNAc...) asparagine). Serine 652 serves as the catalytic Charge relay system. N-linked (GlcNAc...) asparagine glycosylation is found at asparagine 704, asparagine 781, asparagine 849, and asparagine 896. A helical transmembrane segment spans residues tyrosine 971–isoleucine 991. Asparagine 1018 is a glycosylation site (N-linked (GlcNAc...) asparagine). Helical transmembrane passes span phenylalanine 1071–leucine 1091, phenylalanine 1116–isoleucine 1136, glycine 1189–phenylalanine 1209, and threonine 1210–threonine 1230. An ABC transmembrane type-1 domain is found at isoleucine 1075–glutamine 1358. Asparagine 1295 carries N-linked (GlcNAc...) asparagine glycosylation. The next 2 membrane-spanning stretches (helical) occupy residues tryptophan 1304–glutamine 1324 and phenylalanine 1327–threonine 1347. Positions aspartate 1386–isoleucine 1529 are disordered. The span at isoleucine 1388–aspartate 1402 shows a compositional bias: low complexity. The span at aspartate 1403–asparagine 1415 shows a compositional bias: acidic residues. N-linked (GlcNAc...) asparagine glycosylation is present at asparagine 1424. The span at glycine 1465–asparagine 1494 shows a compositional bias: low complexity. The segment covering glutamate 1495–asparagine 1514 has biased composition (acidic residues). Residues asparagine 1515–isoleucine 1529 show a composition bias toward low complexity. The ABC transporter domain maps to isoleucine 1576–phenylalanine 1813. The N-linked (GlcNAc...) asparagine glycan is linked to asparagine 1580. Position 1611-1618 (glycine 1611–serine 1618) interacts with ATP. Asparagine 1715 and asparagine 1755 each carry an N-linked (GlcNAc...) asparagine glycan.

It in the C-terminal section; belongs to the ABC transporter superfamily. ABCB family. Multidrug resistance exporter (TC 3.A.1.201) subfamily. In the N-terminal section; belongs to the peptidase S8 family.

It is found in the membrane. The polypeptide is Serine protease/ABC transporter B family protein tagD (tagD) (Dictyostelium discoideum (Social amoeba)).